We begin with the raw amino-acid sequence, 372 residues long: PqqA peptide cyclase (372 aa).

The Radical SAM core domain occupies 4-220 (APPPLSVLLE…ETARRQLGDR (217 aa)). 3 residues coordinate [4Fe-4S] cluster: cysteine 18, cysteine 22, and cysteine 25. A disordered region spans residues 342-372 (ATAEQESASPAPAFIYRRPERPAAATADPLE).

The protein belongs to the radical SAM superfamily. PqqE family. In terms of assembly, interacts with PqqD. The interaction is necessary for activity of PqqE. The cofactor is [4Fe-4S] cluster.

It catalyses the reaction [PQQ precursor protein] + S-adenosyl-L-methionine = E-Y cross-linked-[PQQ precursor protein] + 5'-deoxyadenosine + L-methionine + H(+). Its pathway is cofactor biosynthesis; pyrroloquinoline quinone biosynthesis. In terms of biological role, catalyzes the cross-linking of a glutamate residue and a tyrosine residue in the PqqA protein as part of the biosynthesis of pyrroloquinoline quinone (PQQ). This chain is PqqA peptide cyclase, found in Xanthomonas euvesicatoria pv. vesicatoria (strain 85-10) (Xanthomonas campestris pv. vesicatoria).